Here is a 61-residue protein sequence, read N- to C-terminus: Large ribosomal subunit protein uL30 (61 aa).

Belongs to the universal ribosomal protein uL30 family. Part of the 50S ribosomal subunit.

In Dichelobacter nodosus (strain VCS1703A), this protein is Large ribosomal subunit protein uL30.